Reading from the N-terminus, the 160-residue chain is MSDSPATAHTRLELPIDIIKIQALLPHRYPFLLVDRILELDQKQKRIVAQKNVSINEPFFQGHFPEHPVMPGVLIIEALAQAGGVMTQLDLSHNGHSSLLFYMVRVDNARFNKQVVPGDILILDMTMKRRIRNMGCYYGEARVNGEVVACADIMCAGVRS.

His-63 is an active-site residue.

It belongs to the thioester dehydratase family. FabZ subfamily.

It is found in the cytoplasm. The catalysed reaction is a (3R)-hydroxyacyl-[ACP] = a (2E)-enoyl-[ACP] + H2O. Functionally, involved in unsaturated fatty acids biosynthesis. Catalyzes the dehydration of short chain beta-hydroxyacyl-ACPs and long chain saturated and unsaturated beta-hydroxyacyl-ACPs. This is 3-hydroxyacyl-[acyl-carrier-protein] dehydratase FabZ from Xylella fastidiosa (strain M12).